A 309-amino-acid chain; its full sequence is MEQLLRAELRTATLRAFGGPGAGCISEGRAYDTDAGPVFVKVNRRTQARQMFEGEVASLEALRSTGLVRVPRPMKVIDLPGGGAAFVMEHLKMKSLSSQASKLGEQMADLHLYNQKLREKLKEEENTVGRRGEGAEPQYVDKFGFHTVTCCGFIPQVNEWQDDWPTFFARHRLQAQLDLIEKDYADREARELWSRLQVKIPDLFCGLEIVPALLHGDLWSGNVAEDDVGPIIYDPASFYGHSEFELAIALMFGGFPRSFFTAYHRKIPKAPGFDQRLLLYQLFNYLNHWNHFGREYRSPSLGTMRRLLK.

At M1 the chain carries N-acetylmethionine. Residue E89–L91 coordinates ATP. D217 serves as the catalytic Proton acceptor.

The protein belongs to the fructosamine kinase family. In terms of assembly, monomer. As to expression, widely expressed. Expressed in erythrocytes.

The catalysed reaction is N(6)-(D-fructosyl)-L-lysyl-[protein] + ATP = N(6)-(3-O-phospho-D-fructosyl)-L-lysyl-[protein] + ADP + H(+). It carries out the reaction N(6)-D-ribulosyl-L-lysyl-[protein] + ATP = N(6)-(3-O-phospho-D-ribulosyl)-L-lysyl-[protein] + ADP + H(+). It catalyses the reaction N(6)-(D-psicosyl)-L-lysyl-[protein] + ATP = N(6)-(3-O-phospho-D-psicosyl)-L-lysyl-[protein] + ADP + H(+). Functionally, fructosamine-3-kinase involved in protein deglycation by mediating phosphorylation of fructoselysine residues on glycated proteins, to generate fructoselysine-3 phosphate. Fructoselysine-3 phosphate adducts are unstable and decompose under physiological conditions. Involved in intracellular deglycation in erythrocytes. Involved in the response to oxidative stress by mediating deglycation of NFE2L2/NRF2, glycation impairing NFE2L2/NRF2 function. Also able to phosphorylate psicosamines and ribulosamines. The polypeptide is Fructosamine-3-kinase (Homo sapiens (Human)).